The sequence spans 214 residues: 3,4-dihydroxy-2-butanone 4-phosphate synthase (214 aa).

Residues 40 to 41 (RE), Asp45, 153 to 157 (RRGHT), and Glu177 contribute to the D-ribulose 5-phosphate site. Glu41 provides a ligand contact to Mg(2+). Residue His156 coordinates Mg(2+).

The protein belongs to the DHBP synthase family. Homodimer. Requires Mg(2+) as cofactor. The cofactor is Mn(2+).

The catalysed reaction is D-ribulose 5-phosphate = (2S)-2-hydroxy-3-oxobutyl phosphate + formate + H(+). The protein operates within cofactor biosynthesis; riboflavin biosynthesis; 2-hydroxy-3-oxobutyl phosphate from D-ribulose 5-phosphate: step 1/1. Its function is as follows. Catalyzes the conversion of D-ribulose 5-phosphate to formate and 3,4-dihydroxy-2-butanone 4-phosphate. The protein is 3,4-dihydroxy-2-butanone 4-phosphate synthase of Rhodospirillum rubrum (strain ATCC 11170 / ATH 1.1.1 / DSM 467 / LMG 4362 / NCIMB 8255 / S1).